The sequence spans 336 residues: NEDD4 family-interacting protein 2 (336 aa).

2 disordered regions span residues 1–24 (MARR…RGAP) and 37–156 (SAAA…SITV). Topologically, residues 1-231 (MARRRSQRVC…ADQLRVGNDG (231 aa)) are cytoplasmic. Residues 37-48 (SAAAAGATGSEE) show a composition bias toward low complexity. The segment covering 78–99 (EHGEDSLSRKPDPEPGRMDHHQ) has biased composition (basic and acidic residues). Residues 148-151 (PPPY) are interaction with NEDD4. Residues 148-151 (PPPY) carry the PPxY motif 1 motif. Phosphotyrosine; by SRC occurs at positions 151, 167, 171, and 177. 2 short sequence motifs (PPxY motif) span residues 174 to 177 (PPPY) and 184 to 186 (PTY). Residues 232–252 (IFMLAFFMAFIFNWLGFCLSF) traverse the membrane as a helical segment. Over 253 to 257 (CITNT) the chain is Extracellular. Residues 258–278 (IAGRYGAICGFGLSLIKWILI) form a helical membrane-spanning segment. The Cytoplasmic segment spans residues 279–287 (VRFSDYFTG). The chain crosses the membrane as a helical span at residues 288–308 (YFNGQYWLWWIFLVLGLLLFF). The Extracellular segment spans residues 309 to 336 (RGFVNYLKVRNMSESMAAAHRTRYFFLL).

Forms heterodimers with NDFIP1. Interacts with HECT domain-containing E3 ubiquitin-protein ligases, including NEDD4. Interacts with NEDD4L. Interacts with PTEN. When phosphorylated at Tyr-167, interacts with SRC and LYN SH2 domain. May thus act as a scaffold that recruits SRC to NDFIP1, enhancing NDFIP1 phosphorylation. Interacts with SLC11A2/DMT1. May interact with phosphorylated EGFR. Interacts with KCNH2. Ubiquitinated by NEDD4 and ITCH. Also ubiquitinated by NEDD4L. Ubiquitination by NEDD4 or NEDD4L does not affect turnover. Post-translationally, undergoes transient tyrosine-phosphorylation following EGF stimulation, most probably catalyzed by SRC. Phosphorylation on Tyr-151, Tyr-171 and Tyr-177 are dependent on the phosphorylation on Tyr-167. Also phosphorylated by LYN and FYN. As to expression, expressed in brain, lung, heart, skeletal muscle, kidney, liver and placenta.

Its subcellular location is the endosome membrane. It localises to the golgi apparatus membrane. It is found in the endosome. The protein resides in the multivesicular body membrane. Activates HECT domain-containing E3 ubiquitin-protein ligases, including ITCH, NEDD4, NEDD4L, SMURF2, WWP1 and WWP2, and consequently modulates the stability of their targets. As a result, may control many cellular processes. Recruits ITCH, NEDD4 and SMURF2 to endosomal membranes. Negatively regulates KCNH2 potassium channel activity by decreasing its cell-surface expression and interfering with channel maturation through recruitment of NEDD4L to the Golgi apparatus and multivesicular body where it mediates KCNH2 degradation. May modulate EGFR signaling. Together with NDFIP1, limits the cytokine signaling and expansion of effector Th2 T-cells by promoting degradation of JAK1, probably by ITCH- and NEDD4L-mediated ubiquitination. The sequence is that of NEDD4 family-interacting protein 2 (NDFIP2) from Homo sapiens (Human).